We begin with the raw amino-acid sequence, 510 residues long: Histidine ammonia-lyase (510 aa).

The 5-imidazolinone (Ala-Gly) cross-link spans 143-145 (ASG). A 2,3-didehydroalanine (Ser) modification is found at serine 144.

The protein belongs to the PAL/histidase family. Post-translationally, contains an active site 4-methylidene-imidazol-5-one (MIO), which is formed autocatalytically by cyclization and dehydration of residues Ala-Ser-Gly.

The protein localises to the cytoplasm. It carries out the reaction L-histidine = trans-urocanate + NH4(+). Its pathway is amino-acid degradation; L-histidine degradation into L-glutamate; N-formimidoyl-L-glutamate from L-histidine: step 1/3. The chain is Histidine ammonia-lyase from Shewanella piezotolerans (strain WP3 / JCM 13877).